The chain runs to 375 residues: Growth/differentiation factor 8 (375 aa).

A signal peptide spans 1–23 (MQKLQLCVYIYLFMLIVAGPVDL). Residues 24–266 (NENSEQKENV…VTDTPKRSRR (243 aa)) constitute a propeptide that is removed on maturation. The N-linked (GlcNAc...) asparagine glycan is linked to N71. 4 disulfide bridges follow: C272/C282, C281/C340, C309/C372, and C313/C374.

Belongs to the TGF-beta family. As to quaternary structure, homodimer; disulfide-linked. Interacts with WFIKKN2, leading to inhibit its activity. Interacts with FST3. In terms of processing, synthesized as large precursor molecule that undergoes proteolytic cleavage to generate an N-terminal propeptide and a disulfide linked C-terminal dimer, which is the biologically active molecule. The circulating form consists of a latent complex of the C-terminal dimer and other proteins, including its propeptide, which maintain the C-terminal dimer in a latent, inactive state. Ligand activation requires additional cleavage of the prodomain by a tolloid-like metalloproteinase.

The protein localises to the secreted. In terms of biological role, acts specifically as a negative regulator of skeletal muscle growth. In Homo sapiens (Human), this protein is Growth/differentiation factor 8 (MSTN).